We begin with the raw amino-acid sequence, 110 residues long: Iron-sulfur cluster assembly protein CyaY (110 aa).

Belongs to the frataxin family.

Its function is as follows. Involved in iron-sulfur (Fe-S) cluster assembly. May act as a regulator of Fe-S biogenesis. The polypeptide is Iron-sulfur cluster assembly protein CyaY (Pseudomonas putida (strain W619)).